Consider the following 512-residue polypeptide: Opioid growth factor receptor-like protein 1 (512 aa).

Disordered regions lie at residues 1–72 (MGNI…ETGT), 323–469 (IWGP…TCCK), and 488–512 (SLSP…GPFT). Acidic residues-rich tracts occupy residues 28–54 (GGEE…DNEE) and 62–71 (TNEGGEEETG). Over residues 328-337 (DKQKADENKA) the composition is skewed to basic and acidic residues. Residues 347 to 361 (QKKHSHVEKKSRPAK) show a composition bias toward basic residues. Residues 408 to 421 (TVTSENNSSKTGQT) are compositionally biased toward polar residues. Basic and acidic residues predominate over residues 449 to 468 (RSLDTEHDLKRPEADRETCC). A compositionally biased stretch (polar residues) spans 490–499 (SPGTSNSNVT).

Belongs to the opioid growth factor receptor family.

The polypeptide is Opioid growth factor receptor-like protein 1 (ogfrl1) (Xenopus tropicalis (Western clawed frog)).